The following is a 518-amino-acid chain: Nitrogenase iron-iron protein alpha chain (518 aa).

Residues Cys-49, Cys-75, and Cys-138 each coordinate [8Fe-7S] cluster. 2 residues coordinate [8Fe-9S-C-homocitryl] cluster: Cys-257 and His-423.

The protein belongs to the NifD/NifK/NifE/NifN family. Hexamer of two alpha, two beta, and two delta chains. The cofactor is [8Fe-7S] cluster. [8Fe-9S-C-homocitryl] cluster is required as a cofactor.

It catalyses the reaction N2 + 8 reduced [2Fe-2S]-[ferredoxin] + 16 ATP + 16 H2O = H2 + 8 oxidized [2Fe-2S]-[ferredoxin] + 2 NH4(+) + 16 ADP + 16 phosphate + 6 H(+). This iron-iron protein is part of the nitrogenase complex that catalyzes the key enzymatic reactions in nitrogen fixation. Other nitrogenase complexes utilize a molybdenum-iron protein or a vanadium-iron protein. This chain is Nitrogenase iron-iron protein alpha chain (anfD), found in Azotobacter vinelandii.